A 394-amino-acid chain; its full sequence is Tryptophan synthase beta chain (394 aa).

The residue at position 90 (Lys-90) is an N6-(pyridoxal phosphate)lysine.

It belongs to the TrpB family. Tetramer of two alpha and two beta chains. The cofactor is pyridoxal 5'-phosphate.

The catalysed reaction is (1S,2R)-1-C-(indol-3-yl)glycerol 3-phosphate + L-serine = D-glyceraldehyde 3-phosphate + L-tryptophan + H2O. The protein operates within amino-acid biosynthesis; L-tryptophan biosynthesis; L-tryptophan from chorismate: step 5/5. The beta subunit is responsible for the synthesis of L-tryptophan from indole and L-serine. The polypeptide is Tryptophan synthase beta chain (Bacteroides thetaiotaomicron (strain ATCC 29148 / DSM 2079 / JCM 5827 / CCUG 10774 / NCTC 10582 / VPI-5482 / E50)).